The chain runs to 426 residues: Enolase (426 aa).

A (2R)-2-phosphoglycerate-binding site is contributed by Gln165. The active-site Proton donor is the Glu209. Positions 244, 287, and 313 each coordinate Mg(2+). Residues Lys338, Arg367, Ser368, and Lys389 each contribute to the (2R)-2-phosphoglycerate site. Lys338 functions as the Proton acceptor in the catalytic mechanism.

It belongs to the enolase family. The cofactor is Mg(2+).

It is found in the cytoplasm. The protein resides in the secreted. The protein localises to the cell surface. The enzyme catalyses (2R)-2-phosphoglycerate = phosphoenolpyruvate + H2O. It functions in the pathway carbohydrate degradation; glycolysis; pyruvate from D-glyceraldehyde 3-phosphate: step 4/5. Functionally, catalyzes the reversible conversion of 2-phosphoglycerate (2-PG) into phosphoenolpyruvate (PEP). It is essential for the degradation of carbohydrates via glycolysis. This Methanococcus maripaludis (strain DSM 14266 / JCM 13030 / NBRC 101832 / S2 / LL) protein is Enolase.